A 668-amino-acid chain; its full sequence is Break repair meiotic recombinase recruitment factor 1 (668 aa).

5 disordered regions span residues 1–142, 155–333, 349–465, 482–521, and 642–668; these read MTKR…AQSP, LQEA…GCSS, LEER…GGQN, VLEHREIADDPLQEPGAQQGIPDTTSELAGQRDHLPHSAD, and LGGKAPLPYPSKGPGNIPRGDPPWREL. The segment covering 114 to 125 has biased composition (basic and acidic residues); it reads TRKEEMKDEDRG. Positions 166–180 are enriched in polar residues; sequence QADSARPEQSSQSPV. Over residues 208–251 the composition is skewed to basic and acidic residues; sequence SQDHLSEQGADDSKPETDRVPGDGGQKEHLPSIDSEGEKPDRGA. Positions 279–296 are enriched in low complexity; sequence TPASAPTSGPAPGLGPAS. Positions 305 to 316 are enriched in polar residues; the sequence is AQGSPDPQQTPS. At S370 the chain carries Phosphoserine. The span at 391-400 shows a compositional bias: low complexity; the sequence is TGETTGESGE.

Interacts with HSF2BP (via N-terminus) and BRCA2; the interaction with HSF2BP is direct and allows the formation of a ternary complex. The complex BRME1:HSF2BP:BRCA2 interacts with SPATA22, MEIOB and RAD51.

The protein localises to the chromosome. Its function is as follows. Meiotic recombination factor component of recombination bridges involved in meiotic double-strand break repair. Modulates the localization of recombinases DMC1:RAD51 to meiotic double-strand break (DSB) sites through the interaction with and stabilization of the BRCA2:HSF2BP complex during meiotic recombination. Indispensable for the DSB repair, homologous synapsis, and crossover formation that are needed for progression past metaphase I, is essential for spermatogenesis and male fertility. This chain is Break repair meiotic recombinase recruitment factor 1, found in Homo sapiens (Human).